A 212-amino-acid polypeptide reads, in one-letter code: Ribosome maturation factor RimP (212 aa).

The protein belongs to the RimP family.

The protein localises to the cytoplasm. In terms of biological role, required for maturation of 30S ribosomal subunits. The chain is Ribosome maturation factor RimP from Variovorax paradoxus (strain S110).